Here is a 631-residue protein sequence, read N- to C-terminus: 30-kDa cleavage and polyadenylation specificity factor 30 (631 aa).

The segment at Glu-12–Ala-38 is disordered. 3 consecutive C3H1-type zinc fingers follow at residues Ser-60–Asp-87, Lys-88–His-112, and Asn-114–Leu-141. Positions Gln-179–Gln-234 are disordered. Residues Pro-182–Gln-215 are compositionally biased toward low complexity. A compositionally biased stretch (polar residues) spans Thr-216–Pro-231. The YTH domain maps to Asn-237–Leu-372. The segment covering Glu-392–Asn-407 has biased composition (basic and acidic residues). 2 disordered regions span residues Glu-392–Met-447 and Pro-541–Arg-631. A compositionally biased stretch (acidic residues) spans Pro-412–Ser-432. The span at Lys-573–Val-583 shows a compositional bias: basic and acidic residues. Ser-610 and Ser-612 each carry phosphoserine. Residues Arg-621–Arg-631 are compositionally biased toward basic residues.

This sequence belongs to the CPSF4/YTH1 family. As to quaternary structure, component of the cleavage and polyadenylation specificity factor (CPSF) complex. Can form homodimers. Binds to calmodulin. Forms a complex with cleavage and polyadenylation specificity factor (CPSF) subunits CPSF73-I, CPSF73-II, CPSF100, CPSF160, CFIS2, FIPS3, FIPS5, PAPS2, PAPS3, CLPS3, PCFS1, PCFS4, CSTF50 and CSTF77. As to expression, expressed in seedlings, roots, leaves, siliques, stems and flowers.

It is found in the nucleus. It localises to the cytoplasm. Its activity is regulated as follows. Endonuclease activity is repressed by the N-terminal domain of FIPS5. Nuclease activity is inhibited by zinc (&gt;100 uM), cadmium in a progressive manner (50 percent activity at 1 mM Cd(2+)), and high salt levels (e.g. KCl or NaCl &gt;600 mM). Stimulated by ATP in the presence of Zn(2+), even at inhibitory zinc concentrations. Elevated temperatures prevent RNA-binding at 55 degrees Celsius, but endonuclease activity at 70 degrees Celsius. The sulfhydryl reagent dithiothreitol (DTT) inhibits both RNA-binding and nuclease activities. Component of the cleavage and polyadenylation specificity factor (CPSF) complex that play a key role in pre-mRNA 3'-end formation. May interact with poly(A) polymerase and other factors to bring about cleavage and poly(A) addition. Mediates poly(A) site selection. Binds RNA in a calcium-dependent manner. Exhibits endonuclease activity with an ability to nick and degrade linear as well as circular single-stranded RNA that leaves RNA 3' ends with hydroxyl groups, thus mediating processing of the pre-mRNA as a prelude to the polyadenylation. Involved in the post-transcriptional control, probably via poly(A) addition, of the responses of plants to stress, especially genes mediating tolerance to oxidative stress. Plays a role in the regulation of salicylic acid (SA) production via the control of messenger RNA 3' end processing, thus being a key component of programmed cell death and plant immune responses required for resistance to virulent Pseudomonas syringae pv tomato DC3000 (Pst). In Arabidopsis thaliana (Mouse-ear cress), this protein is 30-kDa cleavage and polyadenylation specificity factor 30.